Consider the following 196-residue polypeptide: Nucleoid occlusion factor SlmA (196 aa).

The region spanning 6-66 (RNRREEILQA…GLIEFVEDTL (61 aa)) is the HTH tetR-type domain. The H-T-H motif DNA-binding region spans 29–48 (TTAKLAANLGVSEAALYRHF). Residues 108 to 135 (DALMGEHDRLRGRMEDLFNRIESSIKQI) adopt a coiled-coil conformation.

This sequence belongs to the nucleoid occlusion factor SlmA family. In terms of assembly, homodimer. Interacts with FtsZ.

Its subcellular location is the cytoplasm. The protein resides in the nucleoid. Required for nucleoid occlusion (NO) phenomenon, which prevents Z-ring formation and cell division over the nucleoid. Acts as a DNA-associated cell division inhibitor that binds simultaneously chromosomal DNA and FtsZ, and disrupts the assembly of FtsZ polymers. SlmA-DNA-binding sequences (SBS) are dispersed on non-Ter regions of the chromosome, preventing FtsZ polymerization at these regions. This is Nucleoid occlusion factor SlmA from Idiomarina loihiensis (strain ATCC BAA-735 / DSM 15497 / L2-TR).